The sequence spans 183 residues: MKQLLEFIPLILFFTVYKLYGVQQAAITLVIATVIQLIVLKVLYKKIEKSQWIMGIFVVFFGILTAYFNDLNFLKWKVTIINGLFAAVLLVSQFVFKKPIIQMLLGKELKLPTNVWNRLNLGWAGFFIICMLLNIVISYYFSDDVWATFKTFGFTGLSLIAAIATGVYLYPHLKNVENTNEQA.

The next 5 helical transmembrane spans lie at 19-39, 53-73, 76-96, 121-141, and 151-171; these read LYGV…QLIV, IMGI…DLNF, WKVT…QFVF, LGWA…SYYF, and TFGF…YLYP.

The protein belongs to the YciB family.

The protein localises to the cell inner membrane. Plays a role in cell envelope biogenesis, maintenance of cell envelope integrity and membrane homeostasis. This is Inner membrane-spanning protein YciB from Actinobacillus pleuropneumoniae serotype 7 (strain AP76).